Reading from the N-terminus, the 358-residue chain is MKEKINTLLKHAEDIWRKLCKNEIQAKIEKYEKEINQKNFWNDPKRAQKVIKAQSILKNKIDPWEELINKIKDLSDLCEIAENEKDTNGLEIEFNTLEKQYKDLLTISYFKEELDANNAFLTIHSGAGGTEACDWVAMLYRMYSRYAERKKYKTELIDLLEAEGGIKSVTIEIKGEYAYGLLKSEVGIHRLIRISPFDAAKKRHTSFASVFVDPVIDDKIEITIKPEDIRIDTYRASGAGGQHVNKTSSAVRITHIETGIVTQSQSDRSQHKNKDLAMKVLKSRLYEYYKSKEDEKNKSKQDTKKEISWGNQIRSYVFQPYNLVKDHRTKFENSNTTSVMDGNIDNFIEEYLKWKSLN.

Glutamine 242 carries the N5-methylglutamine modification.

It belongs to the prokaryotic/mitochondrial release factor family. Methylated by PrmC. Methylation increases the termination efficiency of RF2.

The protein resides in the cytoplasm. In terms of biological role, peptide chain release factor 2 directs the termination of translation in response to the peptide chain termination codons UGA and UAA. This chain is Peptide chain release factor 2 (prfB), found in Borreliella burgdorferi (strain ATCC 35210 / DSM 4680 / CIP 102532 / B31) (Borrelia burgdorferi).